The chain runs to 976 residues: SAGGISVPGPMGPSGPRGLPGPPGAPGPQGFQGPPGEPGEPGSGPMGPRGPPGPPGKNGDDGEAGKPGRPGERGPPGPQGARGLPGTAGLPGMKGHRGFSGLDGAKGDAGPAGPKGAPGQMGPRGPGERGRPGASGPAGARGNDGATGAAGPPGPTGPAGPPGFPGAVGAKGEAGPQGARGSEGPQGVRGEPGPPGPAGAAGPAGNPGADGQPGAKGANGAPGIAGAPGFPGARGPSGPQGPSGPPGPKGNSGEPGAPGSKAKGEPGPTGIQGPPGPAGEEGKRGARGEPGPTGLPGPGERGGPGSRGFPGADGVAGPKGPAGERGSPGPAGPKGSPGEAGRPGEAGLPGAKGLTGSPGSPGPDGKTGPPGPAGQDGRPGPPGPPGARGQAGVMGFPGPKGAAGEPGKAGERGVPGPPGAVGPAGKDGEAGAQGPPGPAGPAGERGEQGPAGPGFQGLPGPAGPPGEAGKPGEQGVPGDLGAPGPSGARGERGFPGERGVQGPPGPAGPRGSSQGAPGLQGMPGERGAAGLPGPKGDRGDAGPKGADGAPGKDGVRGLTGPIGPPGPAGAPGDKGESGPSGPAGPTGARGAPGDRGEPGPPGPAGFAGPPGADGQPGAKGEPGDAGAKGDAGPPGPAGPTGAPGPIGNLGAPGPKGARGSAGPPGATGFPGAAGRVGPPGPSGNAGPPGPPGPVGKEGGKGPRGETGPAGEVGPPGPPGPGEKGSPGADGPAGAPGTPGPQGISGQRGVVGLPGQRGERGFPGLPGPSGEPGKQGPSGSSGERGPPGPMGPPGLAGPPGESGREGPGAEGSPGRDGSPGPKGDRGETGPGPPGAPGAPGAPGPVGPAGKSGDRGETGPGPAGPAGPAGARGPAGPQGPRGDKGETGEQGDRGIKRGFSGLQGPAGPPGSPGEQGPSGASGPAGPRGPPGSAGSPGKDGLNGLPGPIGPPGPRGRTGDAGPVGPPGPPGPPGPPGPP.

Serine 1 bears the Phosphoserine mark. Residues 1-976 (SAGGISVPGP…PGPPGPPGPP (976 aa)) form a disordered region. 11 positions are modified to 4-hydroxyproline: proline 20, proline 23, proline 26, proline 35, proline 38, proline 41, proline 55, proline 70, proline 76, proline 85, and proline 91. The span at 58–72 (NGDDGEAGKPGRPGE) shows a compositional bias: basic and acidic residues. Position 94 is a 5-hydroxylysine; alternate (lysine 94). O-linked (Gal...) hydroxylysine; alternate glycosylation is present at lysine 94. At serine 100 the chain carries Phosphoserine. Composition is skewed to low complexity over residues 108–118 (DAGPAGPKGAP) and 132–150 (PGAS…TGAA). 4-hydroxyproline is present on residues proline 118, proline 132, proline 153, proline 162, proline 165, proline 192, proline 195, proline 207, proline 213, proline 222, proline 228, proline 231, and proline 246. A compositionally biased stretch (pro residues) spans 152 to 164 (PPGPTGPAGPPGF). Residues 198 to 237 (AGAAGPAGNPGADGQPGAKGANGAPGIAGAPGFPGARGPS) show a composition bias toward low complexity. Lysine 249 carries the 5-hydroxylysine modification. 4-hydroxyproline occurs at positions 255, 258, 266, 275, 290, 296, 304, and 310. The span at 294 to 308 (GLPGPGERGGPGSRG) shows a compositional bias: gly residues. 5-hydroxylysine is present on lysine 319. 25 positions are modified to 4-hydroxyproline: proline 328, proline 337, proline 343, proline 349, proline 358, proline 361, proline 370, proline 379, proline 385, proline 397, proline 406, proline 415, proline 418, proline 436, proline 453, proline 459, proline 465, proline 471, proline 477, proline 483, proline 495, proline 504, proline 517, proline 523, and proline 532. The span at 352–378 (KGLTGSPGSPGPDGKTGPPGPAGQDGR) shows a compositional bias: low complexity. The segment covering 387 to 406 (ARGQAGVMGFPGPKGAAGEP) has biased composition (low complexity). Positions 465–474 (PGEAGKPGEQ) are enriched in low complexity. Residue lysine 544 is modified to 5-hydroxylysine. 4-hydroxyproline occurs at positions 550, 565, and 571. Low complexity predominate over residues 577 to 591 (SGPSGPAGPTGARGA). Serine 580 carries the phosphoserine modification. Proline 592, proline 598, proline 601, proline 610, proline 616, proline 634, proline 643, and proline 652 each carry 4-hydroxyproline. Residues 604–631 (AGFAGPPGADGQPGAKGEPGDAGAKGDA) are compositionally biased toward low complexity. At lysine 655 the chain carries 5-hydroxylysine. The span at 660-676 (SAGPPGATGFPGAAGRV) shows a compositional bias: low complexity. Proline 664 and proline 670 each carry 4-hydroxyproline. Proline 678 is modified (3-hydroxyproline). Proline 679, proline 688, proline 691, proline 718, proline 726, proline 735, proline 753, proline 762, proline 765, proline 771, proline 786, proline 792, proline 798, proline 806, and proline 812 each carry 4-hydroxyproline. Low complexity predominate over residues 723 to 735 (KGSPGADGPAGAP). Residues 785-795 (PPGPMGPPGLA) are compositionally biased toward pro residues. A 5-hydroxylysine modification is found at lysine 821. Residues 829–844 (PGPPGAPGAPGAPGPV) are compositionally biased toward pro residues. Proline 832, proline 835, and proline 838 each carry 4-hydroxyproline. Low complexity predominate over residues 864–878 (AGPAGARGPAGPQGP). A compositionally biased stretch (basic and acidic residues) spans 879 to 893 (RGDKGETGEQGDRGI). Lysine 882 is subject to 5-hydroxylysine. The residue at position 894 (lysine 894) is a 5-hydroxylysine; alternate. A glycan (O-linked (Gal...) hydroxylysine; alternate) is linked at lysine 894. 4-hydroxyproline occurs at positions 907, 910, 928, and 943. Over residues 910 to 943 (PGEQGPSGASGPAGPRGPPGSAGSPGKDGLNGLP) the composition is skewed to low complexity. Proline 948 is modified (3-hydroxyproline). Proline 949 carries the post-translational modification 4-hydroxyproline. Over residues 961 to 976 (VGPPGPPGPPGPPGPP) the composition is skewed to pro residues. The residue at position 963 (proline 963) is a 3-hydroxyproline. Proline 964 carries the 4-hydroxyproline modification. 3-hydroxyproline is present on proline 966. Proline 967 is modified (4-hydroxyproline). Position 969 is a 3-hydroxyproline (proline 969). 4-hydroxyproline is present on residues proline 970, proline 973, and proline 976.

The protein belongs to the fibrillar collagen family. Trimers of one alpha 2(I) and two alpha 1(I) chains. Contains mostly 4-hydroxyproline. Proline residues at the third position of the tripeptide repeating unit (G-X-Y) are hydroxylated in some or all of the chains. In terms of processing, contains 3-hydroxyproline at a few sites. This modification occurs on the first proline residue in the sequence motif Gly-Pro-Hyp, where Hyp is 4-hydroxyproline. Post-translationally, lysine residues at the third position of the tripeptide repeating unit (G-X-Y) are 5-hydroxylated in some or all of the chains. O-glycosylated on hydroxylated lysine residues. The O-linked glycan consists of a Glc-Gal disaccharide. In terms of tissue distribution, expressed in bones.

The protein localises to the secreted. Its subcellular location is the extracellular space. The protein resides in the extracellular matrix. Functionally, type I collagen is a member of group I collagen (fibrillar forming collagen). This Acratocnus ye (Hispaniolan ground sloth) protein is Collagen alpha-1(I) chain.